Here is a 375-residue protein sequence, read N- to C-terminus: Growth/differentiation factor 8 (375 aa).

Positions 1–18 are cleaved as a signal peptide; it reads MQKLQISVYIYLFMLIVA. A propeptide spanning residues 19-266 is cleaved from the precursor; it reads GPVDLNENSE…VTDTPKRSRR (248 aa). Asparagine 71 carries an N-linked (GlcNAc...) asparagine glycan. Disulfide bonds link cysteine 272/cysteine 282, cysteine 281/cysteine 340, cysteine 309/cysteine 372, and cysteine 313/cysteine 374.

The protein belongs to the TGF-beta family. In terms of assembly, homodimer; disulfide-linked. Interacts with WFIKKN2, leading to inhibit its activity. Interacts with FSTL3. Post-translationally, synthesized as large precursor molecule that undergoes proteolytic cleavage to generate an N-terminal propeptide and a disulfide linked C-terminal dimer, which is the biologically active molecule. The circulating form consists of a latent complex of the C-terminal dimer and other proteins, including its propeptide, which maintain the C-terminal dimer in a latent, inactive state. Ligand activation requires additional cleavage of the prodomain by a tolloid-like metalloproteinase.

The protein localises to the secreted. In terms of biological role, acts specifically as a negative regulator of skeletal muscle growth. The protein is Growth/differentiation factor 8 (MSTN) of Lepus capensis (Brown hare).